Here is a 107-residue protein sequence, read N- to C-terminus: Large ribosomal subunit protein uL18c (107 aa).

This sequence belongs to the universal ribosomal protein uL18 family. As to quaternary structure, part of the 50S ribosomal subunit; contacts the 5S rRNA.

It localises to the plastid. Its subcellular location is the chloroplast. Its function is as follows. Binds 5S rRNA, forms part of the central protuberance of the 50S subunit. The chain is Large ribosomal subunit protein uL18c (rpl18) from Guillardia theta (Cryptophyte).